The sequence spans 1465 residues: Gag-Pol polyprotein (1465 aa).

Gly-2 carries the N-myristoyl glycine; by host lipid modification. The short motif at 16-22 (FEHIRLR) is the Nuclear export signal element. A Nuclear localization signal motif is present at residues 26 to 32 (KKKYQIK). The disordered stretch occupies residues 116–144 (NAERNTTETSSGQKKNDKGVTVPPGGSQN). 2 consecutive CCHC-type zinc fingers follow at residues 402–419 (VKCY…QCPE) and 423–440 (MRCL…DCRG). Positions 532–603 (IRALLDTGAD…TPINIIGRNI (72 aa)) constitute a Peptidase A2 domain. Asp-537 serves as the catalytic For protease activity; shared with dimeric partner. One can recognise a Reverse transcriptase domain in the interval 659–849 (EGKISKIGGE…PPYEWMGYKL (191 aa)). Mg(2+) is bound by residues Asp-725, Asp-800, and Asp-801. The segment at 842–850 (YEWMGYKLW) is RT 'primer grip'. Positions 1012 to 1028 (WEQWWADYWQVSWIPDW) match the Tryptophan repeat motif motif. An RNase H type-1 domain is found at 1048–1171 (IPKEDVYYVD…IDKLVSQGMR (124 aa)). The Mg(2+) site is built by Asp-1057, Glu-1092, Asp-1112, and Asp-1163. The Integrase-type zinc-finger motif lies at 1177 to 1218 (EKIEEAQEEHERYHNNWRNLADTYGLPQIVAKEIVAMCPKCQ). Positions 1186, 1190, 1214, and 1217 each coordinate Zn(2+). The 151-residue stretch at 1228-1378 (VDASPGVWQM…TPAERLINMI (151 aa)) folds into the Integrase catalytic domain. Mg(2+) is bound by residues Asp-1238 and Asp-1290. A DNA-binding region (integrase-type) is located at residues 1397–1444 (FRVYYREGRDPVWKGPGQLIWKGEGAVVIKGGVELKEYPRRKAKIIKD).

In terms of assembly, homotrimer. Interacts with gp41 (via C-terminus). As to quaternary structure, homodimer. The active site consists of two apposed aspartic acid residues. Heterodimer of p66 RT and p51 RT (RT p66/p51). Heterodimerization of RT is essential for DNA polymerase activity. Despite the sequence identities, p66 RT and p51 RT have distinct folding. In terms of assembly, homotetramer; may further associate as a homohexadecamer. It depends on Mg(2+) as a cofactor. In terms of processing, specific enzymatic cleavages by the viral protease yield mature proteins. The protease is released by autocatalytic cleavage. The polyprotein is cleaved during and after budding, this process is termed maturation. Proteolytic cleavage of p66 RT removes the RNase H domain to yield the p51 RT subunit. Capsid protein p24 is phosphorylated.

Its subcellular location is the virion. The protein localises to the host nucleus. The protein resides in the host cytoplasm. It is found in the host cell membrane. The catalysed reaction is Specific for a P1 residue that is hydrophobic, and P1' variable, but often Pro.. The enzyme catalyses Endohydrolysis of RNA in RNA/DNA hybrids. Three different cleavage modes: 1. sequence-specific internal cleavage of RNA. Human immunodeficiency virus type 1 and Moloney murine leukemia virus enzymes prefer to cleave the RNA strand one nucleotide away from the RNA-DNA junction. 2. RNA 5'-end directed cleavage 13-19 nucleotides from the RNA end. 3. DNA 3'-end directed cleavage 15-20 nucleotides away from the primer terminus.. It carries out the reaction 3'-end directed exonucleolytic cleavage of viral RNA-DNA hybrid.. It catalyses the reaction DNA(n) + a 2'-deoxyribonucleoside 5'-triphosphate = DNA(n+1) + diphosphate. Its activity is regulated as follows. The viral protease is inhibited by many synthetic protease inhibitors (PIs), such as amprenavir, atazanavir, indinavir, loprinavir, nelfinavir, ritonavir and saquinavir. RT can be inhibited either by nucleoside RT inhibitors (NRTIs) or by non nucleoside RT inhibitors (NNRTIs). NRTIs act as chain terminators, whereas NNRTIs inhibit DNA polymerization by binding a small hydrophobic pocket near the RT active site and inducing an allosteric change in this region. Classical NRTIs are abacavir, adefovir (PMEA), didanosine (ddI), lamivudine (3TC), stavudine (d4T), tenofovir (PMPA), zalcitabine (ddC), and zidovudine (AZT). Classical NNRTIs are atevirdine (BHAP U-87201E), delavirdine, efavirenz (DMP-266), emivirine (I-EBU), and nevirapine (BI-RG-587). The tritherapies used as a basic effective treatment of AIDS associate two NRTIs and one NNRTI. Use of protease inhibitors in tritherapy regimens permit more ambitious therapeutic strategies. Functionally, gag-Pol polyprotein and Gag polyprotein may regulate their own translation, by the binding genomic RNA in the 5'-UTR. At low concentration, Gag-Pol and Gag would promote translation, whereas at high concentration, the polyproteins encapsidate genomic RNA and then shut off translation. Its function is as follows. Matrix protein p17 has two main functions: in infected cell, it targets Gag and Gag-pol polyproteins to the plasma membrane via a multipartite membrane-binding signal, that includes its myristointegration complex. The myristoylation signal and the NLS exert conflicting influences its subcellular localization. The key regulation of these motifs might be phosphorylation of a portion of MA molecules on the C-terminal tyrosine at the time of virus maturation, by virion-associated cellular tyrosine kinase. Implicated in the release from host cell mediated by Vpu. Capsid protein p24 forms the conical core that encapsulates the genomic RNA-nucleocapsid complex in the virion. The core is constituted by capsid protein hexamer subunits. The core is disassembled soon after virion entry. Interaction with host PPIA/CYPA protects the virus from restriction by host TRIM5-alpha and from an unknown antiviral activity in host cells. This capsid restriction by TRIM5 is one of the factors which restricts SIV to the simian species. In terms of biological role, nucleocapsid protein p7 encapsulates and protects viral dimeric unspliced (genomic) RNA. Binds these RNAs through its zinc fingers. Facilitates rearangement of nucleic acid secondary structure during retrotranscription of genomic RNA. This capability is referred to as nucleic acid chaperone activity. Functionally, the aspartyl protease mediates proteolytic cleavages of Gag and Gag-Pol polyproteins during or shortly after the release of the virion from the plasma membrane. Cleavages take place as an ordered, step-wise cascade to yield mature proteins. This process is called maturation. Displays maximal activity during the budding process just prior to particle release from the cell. Also cleaves Nef and Vif, probably concomitantly with viral structural proteins on maturation of virus particles. Hydrolyzes host EIF4GI and PABP1 in order to shut off the capped cellular mRNA translation. The resulting inhibition of cellular protein synthesis serves to ensure maximal viral gene expression and to evade host immune response. Its function is as follows. Reverse transcriptase/ribonuclease H (RT) is a multifunctional enzyme that converts the viral dimeric RNA genome into dsDNA in the cytoplasm, shortly after virus entry into the cell. This enzyme displays a DNA polymerase activity that can copy either DNA or RNA templates, and a ribonuclease H (RNase H) activity that cleaves the RNA strand of RNA-DNA heteroduplexes in a partially processive 3' to 5' endonucleasic mode. Conversion of viral genomic RNA into dsDNA requires many steps. A tRNA binds to the primer-binding site (PBS) situated at the 5'-end of the viral RNA. RT uses the 3' end of the tRNA primer to perform a short round of RNA-dependent minus-strand DNA synthesis. The reading proceeds through the U5 region and ends after the repeated (R) region which is present at both ends of viral RNA. The portion of the RNA-DNA heteroduplex is digested by the RNase H, resulting in a ssDNA product attached to the tRNA primer. This ssDNA/tRNA hybridizes with the identical R region situated at the 3' end of viral RNA. This template exchange, known as minus-strand DNA strong stop transfer, can be either intra- or intermolecular. RT uses the 3' end of this newly synthesized short ssDNA to perform the RNA-dependent minus-strand DNA synthesis of the whole template. RNase H digests the RNA template except for two polypurine tracts (PPTs) situated at the 5'-end and near the center of the genome. It is not clear if both polymerase and RNase H activities are simultaneous. RNase H can probably proceed both in a polymerase-dependent (RNA cut into small fragments by the same RT performing DNA synthesis) and a polymerase-independent mode (cleavage of remaining RNA fragments by free RTs). Secondly, RT performs DNA-directed plus-strand DNA synthesis using the PPTs that have not been removed by RNase H as primers. PPTs and tRNA primers are then removed by RNase H. The 3' and 5' ssDNA PBS regions hybridize to form a circular dsDNA intermediate. Strand displacement synthesis by RT to the PBS and PPT ends produces a blunt ended, linear dsDNA copy of the viral genome that includes long terminal repeats (LTRs) at both ends. Integrase catalyzes viral DNA integration into the host chromosome, by performing a series of DNA cutting and joining reactions. This enzyme activity takes place after virion entry into a cell and reverse transcription of the RNA genome in dsDNA. The first step in the integration process is 3' processing. This step requires a complex comprising the viral genome, matrix protein, Vpr and integrase. This complex is called the pre-integration complex (PIC). The integrase protein removes 2 nucleotides from each 3' end of the viral DNA, leaving recessed CA OH's at the 3' ends. In the second step, the PIC enters cell nucleus. This process is mediated through integrase and Vpr proteins, and allows the virus to infect a non dividing cell. This ability to enter the nucleus is specific of lentiviruses, other retroviruses cannot and rely on cell division to access cell chromosomes. In the third step, termed strand transfer, the integrase protein joins the previously processed 3' ends to the 5' ends of strands of target cellular DNA at the site of integration. The 5'-ends are produced by integrase-catalyzed staggered cuts, 5 bp apart. A Y-shaped, gapped, recombination intermediate results, with the 5'-ends of the viral DNA strands and the 3' ends of target DNA strands remaining unjoined, flanking a gap of 5 bp. The last step is viral DNA integration into host chromosome. This involves host DNA repair synthesis in which the 5 bp gaps between the unjoined strands are filled in and then ligated. Since this process occurs at both cuts flanking the SIV genome, a 5 bp duplication of host DNA is produced at the ends of SIV integration. Alternatively, Integrase may catalyze the excision of viral DNA just after strand transfer, this is termed disintegration. This Cercopithecidae (Old World monkeys) protein is Gag-Pol polyprotein (gag-pol).